The chain runs to 477 residues: PTS system glucose-specific EIICB component (477 aa).

The region spanning 1-388 is the PTS EIIC type-1 domain; the sequence is MFKNVFSSLQ…FNLKTPGREE (388 aa). 9 helical membrane passes run 20 to 40, 51 to 71, 76 to 96, 112 to 132, 152 to 172, 250 to 270, 280 to 300, 304 to 324, and 354 to 374; these read VSVL…FTLI, TGGS…ALGF, GVAA…LSAV, NFSD…AYMF, FVPI…SLIW, LSGG…AIWH, IGSI…TEPI, FILV…LSFP, and IFLF…IFYF. The region spanning 399 to 477 is the PTS EIIB type-1 domain; it reads IEIAPYIVEA…TAIDEYINNI (79 aa). Cys421 serves as the catalytic Phosphocysteine intermediate; for EIIB activity. Position 421 is a phosphocysteine (Cys421).

It is found in the cell inner membrane. The catalysed reaction is N(pros)-phospho-L-histidyl-[protein] + D-glucose(out) = D-glucose 6-phosphate(in) + L-histidyl-[protein]. In terms of biological role, the phosphoenolpyruvate-dependent sugar phosphotransferase system (sugar PTS), a major carbohydrate active transport system, catalyzes the phosphorylation of incoming sugar substrates concomitantly with their translocation across the cell membrane. The enzyme II complex composed of PtsG and Crr is involved in glucose transport. The polypeptide is PTS system glucose-specific EIICB component (ptsG) (Buchnera aphidicola subsp. Schizaphis graminum (strain Sg)).